Reading from the N-terminus, the 87-residue chain is Cytochrome c oxidase subunit 6B1 (87 aa).

The CHCH domain occupies 28 to 74 (TRNCWQNYLDFHRCQKAMTTKGGNVSVCEWYQRVYQSLCPTSWVTDW). A Cx9C motif motif is present at residues 31-41 (CWQNYLDFHRC). Cystine bridges form between cysteine 31/cysteine 66 and cysteine 41/cysteine 55. A Cx10C motif motif is present at residues 55–66 (CEWYQRVYQSLC).

It is found in the mitochondrion intermembrane space. Functionally, connects the two COX monomers into the physiological dimeric form. This chain is Cytochrome c oxidase subunit 6B1 (COX6B1), found in Macaca fascicularis (Crab-eating macaque).